The following is a 380-amino-acid chain: uncharacterized protein (380 aa).

A run of 9 helical transmembrane segments spans residues 15–35, 45–65, 75–95, 98–118, 123–143, 182–202, 217–237, 303–323, and 341–361; these read LFHP…LAFP, LFKI…PFIF, ILYL…FKIT, LFLS…FVKF, IFVD…VLIY, IIAF…MLFI, MVLL…IILL, GTIY…LGVI, and LLLA…LSLL.

It localises to the cell membrane. This is an uncharacterized protein from Methanocaldococcus jannaschii (strain ATCC 43067 / DSM 2661 / JAL-1 / JCM 10045 / NBRC 100440) (Methanococcus jannaschii).